The sequence spans 722 residues: D-(-)-3-hydroxybutyrate oligomer hydrolase (722 aa).

The segment covering 1-11 (MQQRHLSQSAH) has biased composition (polar residues). Positions 1–20 (MQQRHLSQSAHSHGHGTRRA) are disordered. An N-terminal signal peptide occupies residues 1–36 (MQQRHLSQSAHSHGHGTRRAHRRNTIAIAVATLAVA). Residue Ser-327 is the Charge relay system of the active site. The disordered stretch occupies residues 671-697 (PPSQVVRTTPRGGADTDTVGPRIQPSN).

Belongs to the D-(-)-3-hydroxybutyrate oligomer hydrolase family.

It localises to the secreted. The enzyme catalyses (3R)-hydroxybutanoate dimer + H2O = 2 (R)-3-hydroxybutanoate + H(+). It functions in the pathway lipid metabolism; butanoate metabolism. In terms of biological role, participates in the degradation of poly-3-hydroxybutyrate (PHB). It works downstream of poly(3-hydroxybutyrate) depolymerase, hydrolyzing D(-)-3-hydroxybutyrate oligomers of various length (3HB-oligomers) into 3HB-monomers. The sequence is that of D-(-)-3-hydroxybutyrate oligomer hydrolase from Cupriavidus metallidurans (strain ATCC 43123 / DSM 2839 / NBRC 102507 / CH34) (Ralstonia metallidurans).